Here is a 328-residue protein sequence, read N- to C-terminus: Tetraacyldisaccharide 4'-kinase (328 aa).

Position 55–62 (55–62) interacts with ATP; sequence TAGGNGKT.

Belongs to the LpxK family.

The catalysed reaction is a lipid A disaccharide + ATP = a lipid IVA + ADP + H(+). It functions in the pathway glycolipid biosynthesis; lipid IV(A) biosynthesis; lipid IV(A) from (3R)-3-hydroxytetradecanoyl-[acyl-carrier-protein] and UDP-N-acetyl-alpha-D-glucosamine: step 6/6. Transfers the gamma-phosphate of ATP to the 4'-position of a tetraacyldisaccharide 1-phosphate intermediate (termed DS-1-P) to form tetraacyldisaccharide 1,4'-bis-phosphate (lipid IVA). This is Tetraacyldisaccharide 4'-kinase from Escherichia coli O139:H28 (strain E24377A / ETEC).